The primary structure comprises 385 residues: S-adenosylmethionine synthase (385 aa).

Residue His16 coordinates ATP. Asp18 is a Mg(2+) binding site. Glu44 is a K(+) binding site. L-methionine is bound by residues Glu57 and Gln100. The flexible loop stretch occupies residues 100-110 (QSPDINQGVDR). ATP is bound by residues 164–166 (DGK), 230–231 (KF), Asp239, 245–246 (RK), Ala262, and Lys266. Residue Asp239 coordinates L-methionine. Lys270 provides a ligand contact to L-methionine.

It belongs to the AdoMet synthase family. Homotetramer; dimer of dimers. It depends on Mg(2+) as a cofactor. K(+) is required as a cofactor.

It is found in the cytoplasm. The enzyme catalyses L-methionine + ATP + H2O = S-adenosyl-L-methionine + phosphate + diphosphate. It functions in the pathway amino-acid biosynthesis; S-adenosyl-L-methionine biosynthesis; S-adenosyl-L-methionine from L-methionine: step 1/1. Functionally, catalyzes the formation of S-adenosylmethionine (AdoMet) from methionine and ATP. The overall synthetic reaction is composed of two sequential steps, AdoMet formation and the subsequent tripolyphosphate hydrolysis which occurs prior to release of AdoMet from the enzyme. The protein is S-adenosylmethionine synthase of Helicobacter acinonychis (strain Sheeba).